Here is a 968-residue protein sequence, read N- to C-terminus: Glycine dehydrogenase (decarboxylating) (968 aa).

Lys713 carries the post-translational modification N6-(pyridoxal phosphate)lysine.

This sequence belongs to the GcvP family. In terms of assembly, the glycine cleavage system is composed of four proteins: P, T, L and H. It depends on pyridoxal 5'-phosphate as a cofactor.

It carries out the reaction N(6)-[(R)-lipoyl]-L-lysyl-[glycine-cleavage complex H protein] + glycine + H(+) = N(6)-[(R)-S(8)-aminomethyldihydrolipoyl]-L-lysyl-[glycine-cleavage complex H protein] + CO2. Functionally, the glycine cleavage system catalyzes the degradation of glycine. The P protein binds the alpha-amino group of glycine through its pyridoxal phosphate cofactor; CO(2) is released and the remaining methylamine moiety is then transferred to the lipoamide cofactor of the H protein. The chain is Glycine dehydrogenase (decarboxylating) from Variovorax paradoxus (strain S110).